A 419-amino-acid chain; its full sequence is UDP-N-acetylglucosamine 1-carboxyvinyltransferase (419 aa).

22-23 (KN) lines the phosphoenolpyruvate pocket. A UDP-N-acetyl-alpha-D-glucosamine-binding site is contributed by Arg-91. The active-site Proton donor is Cys-115. At Cys-115 the chain carries 2-(S-cysteinyl)pyruvic acid O-phosphothioketal. Residues 120–124 (RPVDL), 160–163 (KVSV), Asp-305, and Val-327 contribute to the UDP-N-acetyl-alpha-D-glucosamine site.

It belongs to the EPSP synthase family. MurA subfamily.

Its subcellular location is the cytoplasm. The enzyme catalyses phosphoenolpyruvate + UDP-N-acetyl-alpha-D-glucosamine = UDP-N-acetyl-3-O-(1-carboxyvinyl)-alpha-D-glucosamine + phosphate. Its pathway is cell wall biogenesis; peptidoglycan biosynthesis. Functionally, cell wall formation. Adds enolpyruvyl to UDP-N-acetylglucosamine. The sequence is that of UDP-N-acetylglucosamine 1-carboxyvinyltransferase from Shigella dysenteriae serotype 1 (strain Sd197).